The primary structure comprises 446 residues: Glutamine synthetase (446 aa).

The GS beta-grasp domain occupies 14-106 (NNVKFIRFQF…VICDVYTTNG (93 aa)). Residues 113–446 (PRGCLKRVLA…DWETKQYLKI (334 aa)) form the GS catalytic domain. Positions 137 and 139 each coordinate Mg(2+). Position 187 (glutamate 187) interacts with ATP. The Mg(2+) site is built by glutamate 192 and glutamate 199. Residues 243–244 (NG) and glycine 244 contribute to the L-glutamate site. Histidine 248 lines the Mg(2+) pocket. ATP contacts are provided by residues 250-252 (HQS) and serine 252. Residues arginine 301, glutamate 307, and arginine 319 each coordinate L-glutamate. Residues arginine 319, arginine 324, and lysine 331 each coordinate ATP. Residue glutamate 336 coordinates Mg(2+). Arginine 338 lines the L-glutamate pocket.

The protein belongs to the glutamine synthetase family. As to quaternary structure, oligomer of 12 subunits arranged in the form of two hexagons. The cofactor is Mg(2+).

It is found in the cytoplasm. It carries out the reaction L-glutamate + NH4(+) + ATP = L-glutamine + ADP + phosphate + H(+). Functionally, probably involved in nitrogen metabolism via ammonium assimilation. Catalyzes the ATP-dependent biosynthesis of glutamine from glutamate and ammonia. This Methanococcus maripaludis (strain DSM 14266 / JCM 13030 / NBRC 101832 / S2 / LL) protein is Glutamine synthetase.